Here is a 341-residue protein sequence, read N- to C-terminus: Major histocompatibility complex class I-related protein 1 (341 aa).

An N-terminal signal peptide occupies residues 1-22; it reads MGELMAFLLPLIIVLMVKHSDS. An alpha-1 region spans residues 23 to 109; sequence RTHSLRYFRL…KRLQRHYNHS (87 aa). Residues 23 to 201 form an antigen-binding cleft region; the sequence is RTHSLRYFRL…EYGKDILQRT (179 aa). Over 23 to 302 the chain is Extracellular; that stretch reads RTHSLRYFRL…QESETIPLVM (280 aa). Tyr-29 and Arg-31 together coordinate 8-(9H-purin-6-yl)-2-oxa-8-azabicyclo[3.3.1]nona-3,6-diene-4,6-dicarbaldehyde. Positions 31, 46, and 65 each coordinate 5-(2-oxoethylideneamino)-6-(D-ribitylamino)uracil. Arg-31, Ser-46, and Lys-65 together coordinate 5-(2-oxopropylideneamino)-6-(D-ribitylamino)uracil. 3 residues coordinate 7-hydroxy-6-methyl-8-(1-D-ribityl)lumazine: Arg-31, Ser-46, and Lys-65. Positions 65 and 80 each coordinate 8-(9H-purin-6-yl)-2-oxa-8-azabicyclo[3.3.1]nona-3,6-diene-4,6-dicarbaldehyde. Residue Lys-65 participates in 2-amino-4-oxopteridine-6-carbaldehyde binding. Lys-65 is a pyridoxal binding site. Residue Asn-107 is glycosylated (N-linked (GlcNAc...) asparagine). The interval 110 to 201 is alpha-2; it reads GSHTYQRMIG…EYGKDILQRT (92 aa). Arg-116 is a binding site for 8-(9H-purin-6-yl)-2-oxa-8-azabicyclo[3.3.1]nona-3,6-diene-4,6-dicarbaldehyde. The 5-(2-oxoethylideneamino)-6-(D-ribitylamino)uracil site is built by Arg-116, Tyr-174, and Gln-175. Residues Arg-116, Tyr-174, and Gln-175 each contribute to the 5-(2-oxopropylideneamino)-6-(D-ribitylamino)uracil site. 7-hydroxy-6-methyl-8-(1-D-ribityl)lumazine-binding residues include Arg-116, Tyr-174, and Gln-175. 2 disulfides stabilise this stretch: Cys-120–Cys-183 and Cys-222–Cys-278. The alpha-3 stretch occupies residues 202-293; that stretch reads EPPLVRVNRK…GVHMVLQVPQ (92 aa). The 97-residue stretch at 203–299 folds into the Ig-like C1-type domain; that stretch reads PPLVRVNRKE…QVPQESETIP (97 aa). A connecting peptide region spans residues 294 to 302; sequence ESETIPLVM. A helical transmembrane segment spans residues 303-323; it reads KAVSGSIVLVIVLAGVGVLVW. The Cytoplasmic segment spans residues 324-341; sequence RRRPREQNGAIYLPTPDR.

It belongs to the MHC class I family. As to quaternary structure, heterotrimer that consists of MR1, B2M and metabolite antigen. Major classes of metabolite ligands presented by MR1 include riboflavin-related antigens, pyrimidines and ribityl lumazines, nucleobase adducts and folate derivatives. Forms reversible covalent Schiff base complexes with microbial pyrimidine-based metabolite, which serves as a molecular switch triggering complete folding, stable association with B2M and translocation of the ternary complex from endoplasmic reticulum to the plasma membrane. Alternatively, forms non-Schiff base complexes with ribityl lumazines. On antigen-presenting cells, the ternary complex interacts with TCR on MR1-restricted T cells. Interacts with TAPBP and TAPBPL chaperones in the endoplasmic reticulum. TAPBP associated or not with MHC class I peptide loading complex binds ligand-free MR1 or MR1-B2M complex, providing for stable MR1 pools ready for metabolite antigen processing. TAPBPL interacts with MR1 in a ligand-independent way; this interaction may stabilize MR1 pool and facilitate ligand loading and dissociation. Structurally, MR1-B2M heterodimer adopts a topology similar to classical MHC class I molecules, with alpha-1 and alpha-2 domains of MR1 forming the antigen-binding cleft composed of two alpha-helices resting on a floor of 7-stranded anti-parallel beta-pleated sheet. MR1-B2M heterodimer (via alpha-helices) interacts with TCR (via CDR domains). In terms of processing, N-glycosylated.

The protein resides in the cell membrane. Its subcellular location is the endoplasmic reticulum membrane. The protein localises to the golgi apparatus membrane. It is found in the early endosome membrane. It localises to the late endosome membrane. In terms of biological role, antigen-presenting molecule specialized in displaying microbial pyrimidine-based metabolites to alpha-beta T cell receptors (TCR) on innate-type mucosal-associated invariant T (MAIT) cells. In complex with B2M preferentially presents riboflavin-derived metabolites to semi-invariant TCRs on MAIT cells, guiding immune surveillance of the microbial metabolome at mucosal epithelial barriers. Signature pyrimidine-based microbial antigens are generated via non-enzymatic condensation of metabolite intermediates of the riboflavin pathway with by-products arising from other metabolic pathways such as glycolysis. Typical potent antigenic metabolites are 5-(2-oxoethylideneamino)-6-D-ribitylaminouracil (5-OE-RU) and 5-(2-oxopropylideneamino)-6-D-ribitylaminouracil (5-OP-RU), products of condensation of 5-amino-6-D-ribityaminouracil (5-A-RU) with glyoxal or methylglyoxal by-products, respectively. May present microbial antigens to various MAIT cell subsets, providing for unique recognition of diverse microbes, including pathogens that do not synthesize riboflavin. Upon antigen recognition, elicits rapid innate-type MAIT cell activation to eliminate pathogenic microbes by directly killing infected cells. During T cell development, drives thymic selection and post-thymic terminal differentiation of MAIT cells in a process dependent on commensal microflora. Acts as an immune sensor of cancer cell metabolome. May present a tumor-specific or -associated metabolite essential for cancer cell survival to a pan-cancer TCR on a non-MAIT CD8-positive T cell clone, triggering T cell-mediated killing of a wide range of cancer cell types. May present tumor-enriched pyridoxal and pyridoxal 5'-phosphate antigens, enabling preferential recognition of cancer cells. Presents nucleobase carbonyl adducts generated during oxidative stress. Captures M3Ade, a nucleobase adduct composed of one adenine modified by a malondialdehyde trimer, for recognition by MR1-restricted T cell clones expressing a polyclonal TCR repertoire. The polypeptide is Major histocompatibility complex class I-related protein 1 (Pan troglodytes (Chimpanzee)).